We begin with the raw amino-acid sequence, 102 residues long: Thioredoxin (102 aa).

The Thioredoxin domain maps to 2 to 102 (LHIDELTFEN…ILIHTINKYL (101 aa)). Catalysis depends on nucleophile residues C29 and C32. C29 and C32 are oxidised to a cystine.

This sequence belongs to the thioredoxin family.

The protein localises to the plastid. It localises to the chloroplast. In terms of biological role, participates in various redox reactions through the reversible oxidation of its active center dithiol to a disulfide and catalyzes dithiol-disulfide exchange reactions. The polypeptide is Thioredoxin (trxA) (Cyanidioschyzon merolae (strain NIES-3377 / 10D) (Unicellular red alga)).